A 310-amino-acid polypeptide reads, in one-letter code: D-apiose import binding protein (310 aa).

An N-terminal signal peptide occupies residues 1–21 (MKLLKASLVALSLAASTFVYA). Residues Asn35, 111–112 (DR), 158–160 (DTN), Arg164, Asn214, Asp239, and Gln260 contribute to the D-apiofuranose site.

Belongs to the bacterial solute-binding protein 2 family.

It localises to the periplasm. Functionally, part of an ABC transporter complex involved in D-apiose import. Binds D-apiose, D-ribose and D-ribulose. The polypeptide is D-apiose import binding protein (Actinobacillus succinogenes (strain ATCC 55618 / DSM 22257 / CCUG 43843 / 130Z)).